Reading from the N-terminus, the 131-residue chain is Cyclin-dependent kinase 4 inhibitor B (131 aa).

ANK repeat units follow at residues 6-35 (GGDADLANAAARGQVEAVRQLLEAGVDPNR), 39-67 (FGRRPIQVMMMGSARVAELLLLHGADPNC), 72-101 (TLTRPVHDAAREGFLDTLVALHRAGGRLDV), and 105-131 (WGRLPVDLAEERGHRDVARYLRATAGD).

The protein belongs to the CDKN2 cyclin-dependent kinase inhibitor family. As to quaternary structure, heterodimer of CDKN2B with CDK4 or CDK6.

Functionally, interacts strongly with CDK4 and CDK6. Potent inhibitor. Potential effector of TGF-beta induced cell cycle arrest. The polypeptide is Cyclin-dependent kinase 4 inhibitor B (CDKN2B) (Bos taurus (Bovine)).